We begin with the raw amino-acid sequence, 503 residues long: Cytochrome P450 71B6 (503 aa).

The helical transmembrane segment at 10 to 30 threads the bilayer; sequence TELLPWLLLLLIPPLLIFFLL. Cys-446 contacts heme.

The protein belongs to the cytochrome P450 family. It depends on heme as a cofactor.

Its subcellular location is the membrane. The protein is Cytochrome P450 71B6 (CYP71B6) of Arabidopsis thaliana (Mouse-ear cress).